Reading from the N-terminus, the 76-residue chain is DNA polymerase III subunit theta (76 aa).

The DNA polymerase holoenzyme is a complex that contains 10 different types of subunits. These subunits are organized into 3 functionally essential subassemblies: the pol III core, the beta sliding clamp processivity factor and the clamp-loading complex. The pol III core (subunits alpha,epsilon and theta) contains the polymerase and the 3'-5' exonuclease proofreading activities. The polymerase is tethered to the template via the sliding clamp processivity factor. The clamp-loading complex assembles the beta processivity factor onto the primer template and plays a central role in the organization and communication at the replication fork. This complex contains delta, delta', psi and chi, and copies of either or both of two different DnaX proteins, gamma and tau. The composition of the holoenzyme is, therefore: (alpha,epsilon,theta)[2]-(gamma/tau)[3]-delta,delta', psi,chi-beta[4].

The catalysed reaction is DNA(n) + a 2'-deoxyribonucleoside 5'-triphosphate = DNA(n+1) + diphosphate. Functionally, DNA polymerase III is a complex, multichain enzyme responsible for most of the replicative synthesis in bacteria. This DNA polymerase also exhibits 3' to 5' exonuclease activity. The exact function of the theta subunit is unknown. The protein is DNA polymerase III subunit theta (holE) of Escherichia coli O157:H7.